A 350-amino-acid polypeptide reads, in one-letter code: Nicotinate-nucleotide--dimethylbenzimidazole phosphoribosyltransferase (350 aa).

The active-site Proton acceptor is Glu316.

This sequence belongs to the CobT family.

It catalyses the reaction 5,6-dimethylbenzimidazole + nicotinate beta-D-ribonucleotide = alpha-ribazole 5'-phosphate + nicotinate + H(+). Its pathway is nucleoside biosynthesis; alpha-ribazole biosynthesis; alpha-ribazole from 5,6-dimethylbenzimidazole: step 1/2. Its function is as follows. Catalyzes the synthesis of alpha-ribazole-5'-phosphate from nicotinate mononucleotide (NAMN) and 5,6-dimethylbenzimidazole (DMB). The polypeptide is Nicotinate-nucleotide--dimethylbenzimidazole phosphoribosyltransferase (Pseudomonas syringae pv. tomato (strain ATCC BAA-871 / DC3000)).